The sequence spans 148 residues: Deoxyuridine 5'-triphosphate nucleotidohydrolase (148 aa).

Substrate is bound by residues R67–G69, N80, L84–D86, and M94.

The protein belongs to the dUTPase family. The cofactor is Mg(2+).

It catalyses the reaction dUTP + H2O = dUMP + diphosphate + H(+). The protein operates within pyrimidine metabolism; dUMP biosynthesis; dUMP from dCTP (dUTP route): step 2/2. Functionally, this enzyme is involved in nucleotide metabolism: it produces dUMP, the immediate precursor of thymidine nucleotides and it decreases the intracellular concentration of dUTP so that uracil cannot be incorporated into DNA. The sequence is that of Deoxyuridine 5'-triphosphate nucleotidohydrolase from Ralstonia pickettii (strain 12J).